We begin with the raw amino-acid sequence, 1430 residues long: DNA-directed RNA polymerase subunit beta' (1430 aa).

Zn(2+) is bound by residues C71, C73, C86, and C89. Positions 461, 463, and 465 each coordinate Mg(2+). The Zn(2+) site is built by C815, C889, C896, and C899. The disordered stretch occupies residues 1388–1430 (RRQEAPAPAATPEQQAEEVFASLGQGEGEGPSPSDEASGPEVE). Residues 1392 to 1405 (APAPAATPEQQAEE) show a composition bias toward low complexity.

It belongs to the RNA polymerase beta' chain family. As to quaternary structure, the RNAP catalytic core consists of 2 alpha, 1 beta, 1 beta' and 1 omega subunit. When a sigma factor is associated with the core the holoenzyme is formed, which can initiate transcription. The cofactor is Mg(2+). It depends on Zn(2+) as a cofactor.

The catalysed reaction is RNA(n) + a ribonucleoside 5'-triphosphate = RNA(n+1) + diphosphate. Its function is as follows. DNA-dependent RNA polymerase catalyzes the transcription of DNA into RNA using the four ribonucleoside triphosphates as substrates. This chain is DNA-directed RNA polymerase subunit beta', found in Halorhodospira halophila (strain DSM 244 / SL1) (Ectothiorhodospira halophila (strain DSM 244 / SL1)).